Here is a 462-residue protein sequence, read N- to C-terminus: MDDLEAVLSRVRDRAVPEPAERDRLRTVAVELADRTREAIADLPVDADVVQVGSTARDTWVSGDRDIDLFVRFDAALDREQLEEYGLAVGHAVLPDGHEEYAEHPYVKGTYEGFDVDLVPCHDVETAGDLISAVDRTPFHDAYLSARLDEGLADDVVLAKAFLKGIGAYGSDLRTEGFSGYLTELLVLELGGFVPLVESARSWHPPVEFDPEGHAERTFDDPLVVVDPTDPTRNVAAVLSAENLARFQHYARELLAAPSEAPFEPVDPAPLDPTDVRDHLDRRETTPVAVVFDAPDLVDDQLWPQLRRSLDGIVRGLNDRGFDVLRARAMTDGSGPEADGDGAKRAALYAELEVAERPAVTRHEGPPVAVRKHAASFYESYADDVDPETYGPFIDGDRYVVEREREFTTVREYLESDAAGDVALGAQVEREFAERDVLVGDAVATLAPAFGVPLREFYEPHP.

2 residues coordinate ATP: Ser-54 and Arg-57. Ser-54 and Arg-57 together coordinate CTP. Positions 66, 68, and 117 each coordinate Mg(2+). ATP contacts are provided by His-140, Lys-160, and Tyr-169. CTP contacts are provided by His-140, Lys-160, and Tyr-169.

This sequence belongs to the tRNA nucleotidyltransferase/poly(A) polymerase family. Archaeal CCA-adding enzyme subfamily. As to quaternary structure, homodimer. Requires Mg(2+) as cofactor.

The catalysed reaction is a tRNA precursor + 2 CTP + ATP = a tRNA with a 3' CCA end + 3 diphosphate. It carries out the reaction a tRNA with a 3' CCA end + 2 CTP + ATP = a tRNA with a 3' CCACCA end + 3 diphosphate. Catalyzes the addition and repair of the essential 3'-terminal CCA sequence in tRNAs without using a nucleic acid template. Adds these three nucleotides in the order of C, C, and A to the tRNA nucleotide-73, using CTP and ATP as substrates and producing inorganic pyrophosphate. tRNA 3'-terminal CCA addition is required both for tRNA processing and repair. Also involved in tRNA surveillance by mediating tandem CCA addition to generate a CCACCA at the 3' terminus of unstable tRNAs. While stable tRNAs receive only 3'-terminal CCA, unstable tRNAs are marked with CCACCA and rapidly degraded. The protein is CCA-adding enzyme of Halorubrum lacusprofundi (strain ATCC 49239 / DSM 5036 / JCM 8891 / ACAM 34).